A 190-amino-acid chain; its full sequence is Protein GrpE (190 aa).

Positions 1-40 (MAKEKKEEVKEEEVSEATSTEGSTDVESTNNDDLTTETQA) are disordered. Over residues 22 to 40 (GSTDVESTNNDDLTTETQA) the composition is skewed to polar residues.

The protein belongs to the GrpE family. As to quaternary structure, homodimer.

It localises to the cytoplasm. In terms of biological role, participates actively in the response to hyperosmotic and heat shock by preventing the aggregation of stress-denatured proteins, in association with DnaK and GrpE. It is the nucleotide exchange factor for DnaK and may function as a thermosensor. Unfolded proteins bind initially to DnaJ; upon interaction with the DnaJ-bound protein, DnaK hydrolyzes its bound ATP, resulting in the formation of a stable complex. GrpE releases ADP from DnaK; ATP binding to DnaK triggers the release of the substrate protein, thus completing the reaction cycle. Several rounds of ATP-dependent interactions between DnaJ, DnaK and GrpE are required for fully efficient folding. The sequence is that of Protein GrpE from Pediococcus pentosaceus (strain ATCC 25745 / CCUG 21536 / LMG 10740 / 183-1w).